Consider the following 600-residue polypeptide: Elongation factor 4 (600 aa).

In terms of domain architecture, tr-type G spans 7 to 189 (SLIRNFSIIA…ALVQRLPAPT (183 aa)). GTP is bound by residues 19 to 24 (DHGKST) and 136 to 139 (NKID).

The protein belongs to the TRAFAC class translation factor GTPase superfamily. Classic translation factor GTPase family. LepA subfamily.

The protein localises to the cell inner membrane. It carries out the reaction GTP + H2O = GDP + phosphate + H(+). Functionally, required for accurate and efficient protein synthesis under certain stress conditions. May act as a fidelity factor of the translation reaction, by catalyzing a one-codon backward translocation of tRNAs on improperly translocated ribosomes. Back-translocation proceeds from a post-translocation (POST) complex to a pre-translocation (PRE) complex, thus giving elongation factor G a second chance to translocate the tRNAs correctly. Binds to ribosomes in a GTP-dependent manner. This chain is Elongation factor 4, found in Gluconobacter oxydans (strain 621H) (Gluconobacter suboxydans).